Here is a 440-residue protein sequence, read N- to C-terminus: Damage-control phosphatase ARMT1 (440 aa).

Mn(2+) contacts are provided by Asp-252 and Asn-253. Substrate is bound at residue 252–253; it reads DN. S-adenosyl-L-methionine is bound by residues Glu-257 and Asp-290. Asp-290 contributes to the Mn(2+) binding site. Substrate contacts are provided by residues 366–370 and Lys-403; that span reads DLNYR. Positions 400-403 match the Subfamily III RTxK motif motif; the sequence is RTLK.

This sequence belongs to the damage-control phosphatase family. Sugar phosphate phosphatase III subfamily. The cofactor is Mn(2+). Requires Ni(2+) as cofactor. Post-translationally, automethylated.

It carries out the reaction beta-D-fructose 1-phosphate + H2O = D-fructose + phosphate. The catalysed reaction is beta-D-fructose 6-phosphate = dihydroxyacetone + D-glyceraldehyde 3-phosphate. The enzyme catalyses L-glutamyl-[protein] + S-adenosyl-L-methionine = [protein]-L-glutamate 5-O-methyl ester + S-adenosyl-L-homocysteine. Metal-dependent phosphatase that shows phosphatase activity against several substrates, including fructose-1-phosphate and fructose-6-phosphate. Its preference for fructose-1-phosphate, a strong glycating agent that causes DNA damage rather than a canonical yeast metabolite, suggests a damage-control function in hexose phosphate metabolism. Has also been shown to have O-methyltransferase activity that methylates glutamate residues of target proteins to form gamma-glutamyl methyl ester residues. Possibly methylates PCNA, suggesting it is involved in the DNA damage response. The chain is Damage-control phosphatase ARMT1 from Xenopus tropicalis (Western clawed frog).